The sequence spans 280 residues: 4-diphosphocytidyl-2-C-methyl-D-erythritol kinase (280 aa).

K11 is a catalytic residue. 95–105 (PVAAGLGGGSS) is an ATP binding site. The active site involves D137.

Belongs to the GHMP kinase family. IspE subfamily.

The enzyme catalyses 4-CDP-2-C-methyl-D-erythritol + ATP = 4-CDP-2-C-methyl-D-erythritol 2-phosphate + ADP + H(+). Its pathway is isoprenoid biosynthesis; isopentenyl diphosphate biosynthesis via DXP pathway; isopentenyl diphosphate from 1-deoxy-D-xylulose 5-phosphate: step 3/6. Catalyzes the phosphorylation of the position 2 hydroxy group of 4-diphosphocytidyl-2C-methyl-D-erythritol. The sequence is that of 4-diphosphocytidyl-2-C-methyl-D-erythritol kinase from Pelobacter propionicus (strain DSM 2379 / NBRC 103807 / OttBd1).